Reading from the N-terminus, the 241-residue chain is Protein GrpE (241 aa).

Residues 28–49 are compositionally biased toward basic and acidic residues; that stretch reads QNCQKEETQTTNKDNQKEDETF. The disordered stretch occupies residues 28–78; the sequence is QNCQKEETQTTNKDNQKEDETFKNQPNKTKQTNTKQQKHLSKESSHQQITK. Residues 50–62 show a composition bias toward low complexity; the sequence is KNQPNKTKQTNTK.

The protein belongs to the GrpE family. In terms of assembly, homodimer.

Its subcellular location is the cytoplasm. Participates actively in the response to hyperosmotic and heat shock by preventing the aggregation of stress-denatured proteins, in association with DnaK and GrpE. It is the nucleotide exchange factor for DnaK and may function as a thermosensor. Unfolded proteins bind initially to DnaJ; upon interaction with the DnaJ-bound protein, DnaK hydrolyzes its bound ATP, resulting in the formation of a stable complex. GrpE releases ADP from DnaK; ATP binding to DnaK triggers the release of the substrate protein, thus completing the reaction cycle. Several rounds of ATP-dependent interactions between DnaJ, DnaK and GrpE are required for fully efficient folding. The protein is Protein GrpE of Aster yellows witches'-broom phytoplasma (strain AYWB).